The chain runs to 139 residues: D-ribose pyranase (139 aa).

The active-site Proton donor is the H20. Residues D28, H106, and 128–130 contribute to the substrate site; that span reads YAN.

This sequence belongs to the RbsD / FucU family. RbsD subfamily. In terms of assembly, homodecamer.

It is found in the cytoplasm. It carries out the reaction beta-D-ribopyranose = beta-D-ribofuranose. Its pathway is carbohydrate metabolism; D-ribose degradation; D-ribose 5-phosphate from beta-D-ribopyranose: step 1/2. Its function is as follows. Catalyzes the interconversion of beta-pyran and beta-furan forms of D-ribose. The chain is D-ribose pyranase from Shewanella pealeana (strain ATCC 700345 / ANG-SQ1).